Reading from the N-terminus, the 282-residue chain is tRNA N(3)-cytidine methyltransferase METTL6 (282 aa).

The S-adenosyl-L-methionine site is built by tryptophan 45, tyrosine 49, glycine 87, aspartate 110, aspartate 136, leucine 137, and isoleucine 157.

It belongs to the methyltransferase superfamily. METL family. In terms of assembly, monomer. Interacts with SARS1/SerRS; interaction is mediated via tRNA(Ser) and is required for N(3)-methylcytidine methylation.

Its subcellular location is the cytoplasm. It localises to the nucleus. The enzyme catalyses cytidine(32) in tRNA(Ser) + S-adenosyl-L-methionine = N(3)-methylcytidine(32) in tRNA(Ser) + S-adenosyl-L-homocysteine + H(+). Its function is as follows. S-adenosyl-L-methionine-dependent methyltransferase that mediates N(3)-methylcytidine modification of residue 32 of the tRNA anticodon loop of tRNA(Ser), including tRNA(Ser)(UGA) and tRNA(Ser)(GCU). Interaction with SARS1/SerRS is required for N(3)-methylcytidine methylation. This chain is tRNA N(3)-cytidine methyltransferase METTL6 (METTL6), found in Pongo abelii (Sumatran orangutan).